The sequence spans 192 residues: Peptide deformylase (192 aa).

Positions 108 and 150 each coordinate Fe cation. Glu151 is an active-site residue. His154 lines the Fe cation pocket.

The protein belongs to the polypeptide deformylase family. Fe(2+) serves as cofactor.

The enzyme catalyses N-terminal N-formyl-L-methionyl-[peptide] + H2O = N-terminal L-methionyl-[peptide] + formate. In terms of biological role, removes the formyl group from the N-terminal Met of newly synthesized proteins. Requires at least a dipeptide for an efficient rate of reaction. N-terminal L-methionine is a prerequisite for activity but the enzyme has broad specificity at other positions. This is Peptide deformylase from Opitutus terrae (strain DSM 11246 / JCM 15787 / PB90-1).